The sequence spans 244 residues: Cell division protein ZapD (244 aa).

It belongs to the ZapD family. As to quaternary structure, interacts with FtsZ.

It localises to the cytoplasm. In terms of biological role, cell division factor that enhances FtsZ-ring assembly. Directly interacts with FtsZ and promotes bundling of FtsZ protofilaments, with a reduction in FtsZ GTPase activity. In Shewanella baltica (strain OS223), this protein is Cell division protein ZapD.